A 404-amino-acid chain; its full sequence is Multidrug resistance protein MdtG (404 aa).

Helical transmembrane passes span leucine 19–valine 39, leucine 56–alanine 76, leucine 90–isoleucine 110, alanine 113–valine 133, threonine 144–alanine 164, proline 171–isoleucine 191, leucine 222–leucine 242, isoleucine 254–proline 274, isoleucine 288–threonine 308, phenylalanine 317–asparagine 337, and alanine 376–leucine 396.

It belongs to the major facilitator superfamily. DHA1 family. MdtG (TC 2.A.1.2.20) subfamily.

The protein resides in the cell inner membrane. The polypeptide is Multidrug resistance protein MdtG (Salmonella agona (strain SL483)).